A 495-amino-acid polypeptide reads, in one-letter code: 3-octaprenyl-4-hydroxybenzoate carboxy-lyase (495 aa).

Asn-172 serves as a coordination point for Mn(2+). Prenylated FMN is bound by residues 175–177 (IYR), 189–191 (RWL), and 194–195 (RG). Residue Glu-238 participates in Mn(2+) binding. Asp-287 functions as the Proton donor in the catalytic mechanism.

Belongs to the UbiD family. In terms of assembly, homohexamer. Requires prenylated FMN as cofactor. It depends on Mn(2+) as a cofactor.

The protein localises to the cell membrane. The catalysed reaction is a 4-hydroxy-3-(all-trans-polyprenyl)benzoate + H(+) = a 2-(all-trans-polyprenyl)phenol + CO2. It participates in cofactor biosynthesis; ubiquinone biosynthesis. Functionally, catalyzes the decarboxylation of 3-octaprenyl-4-hydroxy benzoate to 2-octaprenylphenol, an intermediate step in ubiquinone biosynthesis. The sequence is that of 3-octaprenyl-4-hydroxybenzoate carboxy-lyase from Yersinia enterocolitica serotype O:8 / biotype 1B (strain NCTC 13174 / 8081).